Reading from the N-terminus, the 464-residue chain is tRNA-2-methylthio-N(6)-dimethylallyladenosine synthase (464 aa).

Residues 19–135 (GSYWITTFGC…LENLLERVDS (117 aa)) enclose the MTTase N-terminal domain. Residues Cys28, Cys64, Cys98, Cys170, Cys174, and Cys177 each coordinate [4Fe-4S] cluster. The Radical SAM core domain maps to 156–393 (RDSTICGWVN…NELVEATSRK (238 aa)). In terms of domain architecture, TRAM spans 396-464 (QRYLNNTESV…SFSLSGQIYK (69 aa)).

It belongs to the methylthiotransferase family. MiaB subfamily. Monomer. Requires [4Fe-4S] cluster as cofactor.

Its subcellular location is the cytoplasm. It catalyses the reaction N(6)-dimethylallyladenosine(37) in tRNA + (sulfur carrier)-SH + AH2 + 2 S-adenosyl-L-methionine = 2-methylsulfanyl-N(6)-dimethylallyladenosine(37) in tRNA + (sulfur carrier)-H + 5'-deoxyadenosine + L-methionine + A + S-adenosyl-L-homocysteine + 2 H(+). In terms of biological role, catalyzes the methylthiolation of N6-(dimethylallyl)adenosine (i(6)A), leading to the formation of 2-methylthio-N6-(dimethylallyl)adenosine (ms(2)i(6)A) at position 37 in tRNAs that read codons beginning with uridine. The chain is tRNA-2-methylthio-N(6)-dimethylallyladenosine synthase from Prochlorococcus marinus (strain MIT 9515).